We begin with the raw amino-acid sequence, 371 residues long: Meiotic drive suppressor wtf18 (371 aa).

The next 8 membrane-spanning stretches (helical) occupy residues 86-106 (FLLR…TAWV), 120-140 (AFSV…FCFF), 153-173 (VTVI…AQCV), 197-217 (DLVV…FGCV), 233-253 (CSIS…IWTL), 257-277 (LFGL…TKGL), 287-307 (ATGY…LFFY), and 321-341 (FIGN…GGIG).

The protein belongs to the WTF family. As to quaternary structure, homomer. Interacts with other proteins that exhibit high sequence similarity.

It is found in the spore membrane. The protein localises to the vacuole membrane. Functionally, acts as a suppressor component of the dual wtf meiotic drive system, and can suppress but not confer meiotic drive by compatible poisons. Wtf meiotic drive systems promote unequal transmission of alleles from the parental zygote to progeny spores by encoding a poison and an antidote from the same locus; the poison is trans-acting and forms toxic aggregates in all spores within an ascus, wherease the antidote is spore-specific and targets aggregates for degradation by the vacuole. Meiotic drive by wtf systems therefore lead to poisoning of all progeny that do not inherit the dual poison/antidote allele, or express a compatible antidote. The sequence is that of Meiotic drive suppressor wtf18 from Schizosaccharomyces kambucha (Fission yeast).